The chain runs to 430 residues: Glial fibrillary acidic protein (430 aa).

Residues 1–31 form a disordered region; the sequence is MERRRITSARRSYASSETMVRGHGPTRHLGT. The segment at 1–70 is head; that stretch reads MERRRITSAR…KETRASERAE (70 aa). Residue T7 is modified to Phosphothreonine; by AURKB and ROCK1. Positions 9–18 are enriched in polar residues; sequence ARRSYASSET. R11 is modified (omega-N-methylarginine). At S12 the chain carries Phosphoserine. R21 carries the omega-N-methylarginine modification. A Citrulline modification is found at R34. Residue S36 is modified to Phosphoserine; by AURKB and ROCK1. T41 bears the Phosphothreonine mark. The IF rod domain maps to 67-375; it reads ERAEMMELND…KLLEGEENRI (309 aa). The segment at 71–102 is coil 1A; the sequence is MMELNDRFASYIEKVRFLEQQNKALAAELNQL. Position 80 is a phosphoserine (S80). The segment at 103–113 is linker 1; the sequence is RAKEPTKLADV. Phosphothreonine occurs at positions 108 and 148. A coil 1B region spans residues 114 to 212; sequence YQAELRELRL…EEEVRELQEQ (99 aa). The tract at residues 213–228 is linker 12; sequence LAQQQVHVEMDVAKPD. The coil 2A stretch occupies residues 229-250; it reads LTAALREIRTQYEAVATSNMQE. The tract at residues 251–254 is linker 2; it reads TEEW. Residues 255–375 form a coil 2B region; that stretch reads YRSKFADLTD…KLLEGEENRI (121 aa). S267 bears the Phosphoserine mark. R268 carries the post-translational modification Citrulline. Phosphoserine is present on S321. A tail region spans residues 376–430; it reads TIPVQTFSNLQIRETSLDTKSVSEGHLKRNIVVKTVEMRDGEVIKESKQEHKDVM. A Phosphothreonine modification is found at T381. Residue S383 is modified to Phosphoserine. A citrulline mark is found at R404 and R414.

The protein belongs to the intermediate filament family. As to quaternary structure, interacts with SYNM. Interacts with PSEN1 (via N-terminus). Phosphorylated by PKN1. Expressed in the cortex and hippocampus. Expression decreases following acute and chronic corticosterone treatment.

It localises to the cytoplasm. In terms of biological role, GFAP, a class-III intermediate filament, is a cell-specific marker that, during the development of the central nervous system, distinguishes astrocytes from other glial cells. The sequence is that of Glial fibrillary acidic protein (Gfap) from Rattus norvegicus (Rat).